Here is a 270-residue protein sequence, read N- to C-terminus: tRNA pseudouridine synthase A (270 aa).

The active-site Nucleophile is the Asp60. An RNA binding region spans residues 107–111; sequence FHARF. Substrate is bound at residue Tyr118. The interval 168–172 is interaction with tRNA; that stretch reads QCQSR.

This sequence belongs to the tRNA pseudouridine synthase TruA family. As to quaternary structure, homodimer.

It carries out the reaction uridine(38/39/40) in tRNA = pseudouridine(38/39/40) in tRNA. In terms of biological role, formation of pseudouridine at positions 38, 39 and 40 in the anticodon stem and loop of transfer RNAs. The chain is tRNA pseudouridine synthase A from Klebsiella pneumoniae subsp. pneumoniae (strain ATCC 700721 / MGH 78578).